A 702-amino-acid chain; its full sequence is Ribosomal RNA large subunit methyltransferase K/L (702 aa).

The THUMP domain maps to 43 to 154 (LIYQSLMWSR…KETASIALDL (112 aa)).

The protein belongs to the methyltransferase superfamily. RlmKL family.

Its subcellular location is the cytoplasm. The enzyme catalyses guanosine(2445) in 23S rRNA + S-adenosyl-L-methionine = N(2)-methylguanosine(2445) in 23S rRNA + S-adenosyl-L-homocysteine + H(+). It catalyses the reaction guanosine(2069) in 23S rRNA + S-adenosyl-L-methionine = N(2)-methylguanosine(2069) in 23S rRNA + S-adenosyl-L-homocysteine + H(+). In terms of biological role, specifically methylates the guanine in position 2445 (m2G2445) and the guanine in position 2069 (m7G2069) of 23S rRNA. This is Ribosomal RNA large subunit methyltransferase K/L from Salmonella typhi.